Here is a 269-residue protein sequence, read N- to C-terminus: Ribosomal RNA small subunit methyltransferase J (269 aa).

S-adenosyl-L-methionine contacts are provided by residues 125–126 and Asp-179; that span reads ER.

It belongs to the methyltransferase superfamily. RsmJ family.

The protein localises to the cytoplasm. The catalysed reaction is guanosine(1516) in 16S rRNA + S-adenosyl-L-methionine = N(2)-methylguanosine(1516) in 16S rRNA + S-adenosyl-L-homocysteine + H(+). Functionally, specifically methylates the guanosine in position 1516 of 16S rRNA. The chain is Ribosomal RNA small subunit methyltransferase J from Pseudomonas savastanoi pv. phaseolicola (strain 1448A / Race 6) (Pseudomonas syringae pv. phaseolicola (strain 1448A / Race 6)).